The following is a 351-amino-acid chain: Transmembrane protein 255A (351 aa).

The next 4 helical transmembrane spans lie at 30 to 50 (IYVT…GLAA), 57 to 77 (VTVG…LGII), 89 to 109 (LVAS…CAIV), and 226 to 246 (TILN…LGGF). The tract at residues 302 to 331 (FPSSPPSGLSDEQEPQSPSPSPSYMWSSSA) is disordered.

This sequence belongs to the TMEM255 family.

It localises to the membrane. The sequence is that of Transmembrane protein 255A (Tmem255a) from Rattus norvegicus (Rat).